The chain runs to 234 residues: Enterobactin synthase component D (234 aa).

Mg(2+)-binding residues include Asp107, Glu109, and Glu152.

This sequence belongs to the P-Pant transferase superfamily. EntD family. EntB, EntD, EntE, and EntF form a multienzyme complex called enterobactin synthase. Requires Mg(2+) as cofactor.

It localises to the membrane. It catalyses the reaction apo-[aryl-carrier protein] + CoA = holo-[aryl-carrier protein] + adenosine 3',5'-bisphosphate + H(+). It carries out the reaction apo-[peptidyl-carrier protein] + CoA = holo-[peptidyl-carrier protein] + adenosine 3',5'-bisphosphate + H(+). The protein operates within siderophore biosynthesis; enterobactin biosynthesis. In terms of biological role, involved in the biosynthesis of the siderophore enterobactin (enterochelin), which is a macrocyclic trimeric lactone of N-(2,3-dihydroxybenzoyl)-serine. The serine trilactone serves as a scaffolding for the three catechol functionalities that provide hexadentate coordination for the tightly ligated iron(2+) atoms. Plays an essential role in the assembly of the enterobactin by catalyzing the transfer of the 4'-phosphopantetheine (Ppant) moiety from coenzyme A to the apo-domains of both EntB (ArCP domain) and EntF (PCP domain) to yield their holo-forms which make them competent for the activation of 2,3-dihydroxybenzoate (DHB) and L-serine, respectively. This chain is Enterobactin synthase component D, found in Salmonella typhimurium (strain LT2 / SGSC1412 / ATCC 700720).